Reading from the N-terminus, the 48-residue chain is uncharacterized protein (48 aa).

Residues 1–20 (MLLKNWPSRRIQRDKSKRAG) are disordered.

This is an uncharacterized protein from Bacillus subtilis (strain 168).